A 540-amino-acid chain; its full sequence is tRNA-2-methylthio-N(6)-dimethylallyladenosine synthase (540 aa).

An MTTase N-terminal domain is found at 41 to 157; sequence RTYEVRTFGC…LPTLLERSAH (117 aa). 6 residues coordinate [4Fe-4S] cluster: cysteine 50, cysteine 86, cysteine 120, cysteine 194, cysteine 198, and cysteine 201. The 237-residue stretch at 180 to 416 folds into the Radical SAM core domain; that stretch reads RESAYSGWVS…IALQERIQAE (237 aa). The region spanning 419–486 is the TRAM domain; it reads KELVGTTQEL…PFFLIADGPL (68 aa).

The protein belongs to the methylthiotransferase family. MiaB subfamily. In terms of assembly, monomer. Requires [4Fe-4S] cluster as cofactor.

The protein resides in the cytoplasm. The catalysed reaction is N(6)-dimethylallyladenosine(37) in tRNA + (sulfur carrier)-SH + AH2 + 2 S-adenosyl-L-methionine = 2-methylsulfanyl-N(6)-dimethylallyladenosine(37) in tRNA + (sulfur carrier)-H + 5'-deoxyadenosine + L-methionine + A + S-adenosyl-L-homocysteine + 2 H(+). Functionally, catalyzes the methylthiolation of N6-(dimethylallyl)adenosine (i(6)A), leading to the formation of 2-methylthio-N6-(dimethylallyl)adenosine (ms(2)i(6)A) at position 37 in tRNAs that read codons beginning with uridine. The polypeptide is tRNA-2-methylthio-N(6)-dimethylallyladenosine synthase (Corynebacterium urealyticum (strain ATCC 43042 / DSM 7109)).